A 60-amino-acid chain; its full sequence is Mastoparan-VB1 (60 aa).

A signal peptide spans 1-23 (MKNTILLLFTAFIFLSGFFGMSA). A propeptide spanning residues 24–45 (EALADPKADPLAGPFPDADPDP) is cleaved from the precursor. AXPX repeat units follow at residues 27-30 (ADPK), 31-34 (ADPL), 35-38 (AGPF), and 40-43 (DADP). Position 59 is a leucine amide (Leu-59).

In terms of tissue distribution, expressed by the venom gland.

The protein localises to the secreted. It is found in the target cell membrane. Its function is as follows. Antimicrobial peptide. Shows activity against both Gram-positive (S.aureus MIC=1.9-3.75 ug/ml) and -negative (E.coli MIC=15-60 ug/ml) bacteria, as well against fungi (C.albicans MIC=15 ug/ml). Also promotes moderate mast cell degranulation. Does not show hemolytic activity on rabbit and human erythrocytes. Its mast cell degranulation activity may be related to the activation of G-protein coupled receptors in mast cells as well as interaction with other proteins located in cell endosomal membranes in the mast cells. The protein is Mastoparan-VB1 of Vespa bicolor (Black shield wasp).